Reading from the N-terminus, the 126-residue chain is RuBisCO chaperone RbcX (126 aa).

It belongs to the RbcX family. As to quaternary structure, homodimer. Interacts with the exposed C-terminal peptide of RbcL via its central cleft, contacts a second RbcL monomer via its peripheral polar surface.

It is found in the carboxysome. Its subcellular location is the cytoplasm. In terms of biological role, an RbcL-specific chaperone. Required for assembly of the RbcL8 core. The central cleft of the RbcX homodimer (RbcX2) binds the C-terminus of a RbcL monomer, stabilizing the C-terminus and probably preventing its reassociation with chaperonin GroEL-ES. At the same time the peripheral region of RbcX2 binds a second RbcL monomer, bridging the RbcL homodimers in the correct orientation. The RbcX2(2)-bound RbcL dimers then assemble into the RbcL8 core (RbcL8-(RbcX2)8). RbcS binding triggers the release of RbcX2. In Thermosynechococcus vestitus (strain NIES-2133 / IAM M-273 / BP-1), this protein is RuBisCO chaperone RbcX.